The following is a 382-amino-acid chain: 6-hydroxynicotinate 3-monooxygenase (382 aa).

Residues methionine 1–glutamine 25 form the signal peptide. FAD contacts are provided by residues glycine 15, glutamate 34–glutamine 35, histidine 47, arginine 108, and leucine 130. The active-site Proton acceptor is histidine 47. Tyrosine 215 serves as the catalytic Proton acceptor. FAD is bound by residues aspartate 294 and alanine 307 to cysteine 308.

The protein belongs to the 6-hydroxynicotinate 3-monooxygenase family. As to quaternary structure, monomer. FAD serves as cofactor.

It catalyses the reaction 6-hydroxynicotinate + NADH + O2 + 2 H(+) = 2,5-dihydroxypyridine + CO2 + NAD(+) + H2O. The protein operates within cofactor degradation; nicotinate degradation. In terms of biological role, flavin-dependent monooxygenase (FMO) that catalyzes the decarboxylative hydroxylation of 6-hydroxynicotinic acid (6-HNA) to 2,5-dihydroxypyridine (2,5-DHP) with concomitant oxidation of NADH, a step in the aerobic nicotinate degradation pathway. The chain is 6-hydroxynicotinate 3-monooxygenase from Pseudomonas putida (strain ATCC 47054 / DSM 6125 / CFBP 8728 / NCIMB 11950 / KT2440).